A 176-amino-acid chain; its full sequence is MDLSEPIHDFLLVFLGSGLILGGLGVVLLPNPIYSAFSLGLVLVCTSLFYILSNAYFVAAAQLLIYVGAINVLIIFAVMFMNGSEYYKDFHLWTVGDGITSMVCISLFISLITTISDTSWYGIIWTTRSNQIIEQDFLSNSQQIGIHLSTDFFLPFELISIILLVALIGAIAVARQ.

Helical transmembrane passes span 10–30, 32–52, 61–81, 92–112, and 152–172; these read FLLV…VLLP, PIYS…FYIL, AQLL…VMFM, LWTV…ISLI, and FFLP…GAIA.

The protein belongs to the complex I subunit 6 family. NDH is composed of at least 16 different subunits, 5 of which are encoded in the nucleus.

The protein localises to the plastid. The protein resides in the chloroplast thylakoid membrane. The catalysed reaction is a plastoquinone + NADH + (n+1) H(+)(in) = a plastoquinol + NAD(+) + n H(+)(out). The enzyme catalyses a plastoquinone + NADPH + (n+1) H(+)(in) = a plastoquinol + NADP(+) + n H(+)(out). Functionally, NDH shuttles electrons from NAD(P)H:plastoquinone, via FMN and iron-sulfur (Fe-S) centers, to quinones in the photosynthetic chain and possibly in a chloroplast respiratory chain. The immediate electron acceptor for the enzyme in this species is believed to be plastoquinone. Couples the redox reaction to proton translocation, and thus conserves the redox energy in a proton gradient. The sequence is that of NAD(P)H-quinone oxidoreductase subunit 6, chloroplastic (ndhG) from Solanum lycopersicum (Tomato).